The following is a 313-amino-acid chain: Fe-S cluster assembly protein dre2 (313 aa).

2 disordered regions span residues Met-1–Arg-25 and Gly-151–Asn-187. The interval Asn-20–Val-145 is N-terminal SAM-like domain. The interval Pro-146–Leu-203 is linker. Polar residues predominate over residues Asn-159–Gly-177. Residues Cys-213, Cys-225, Cys-228, and Cys-230 each contribute to the [2Fe-2S] cluster site. The segment at Cys-213–Cys-230 is fe-S binding site A. [4Fe-4S] cluster contacts are provided by Cys-276, Cys-279, Cys-287, and Cys-290. 2 short sequence motifs (cx2C motif) span residues Cys-276–Cys-279 and Cys-287–Cys-290. A fe-S binding site B region spans residues Cys-276–Cys-290.

Belongs to the anamorsin family. In terms of assembly, monomer. Interacts with tah18. Interacts with mia40. [2Fe-2S] cluster serves as cofactor. [4Fe-4S] cluster is required as a cofactor.

It is found in the cytoplasm. It localises to the mitochondrion intermembrane space. In terms of biological role, component of the cytosolic iron-sulfur (Fe-S) protein assembly (CIA) machinery required for the maturation of extramitochondrial Fe-S proteins. Part of an electron transfer chain functioning in an early step of cytosolic Fe-S biogenesis, facilitating the de novo assembly of a [4Fe-4S] cluster on the scaffold complex cfd1-nbp35. Electrons are transferred to dre2 from NADPH via the FAD- and FMN-containing protein tah18. Tah18-dre2 are also required for the assembly of the diferric tyrosyl radical cofactor of ribonucleotide reductase (RNR), probably by providing electrons for reduction during radical cofactor maturation in the catalytic small subunit rnr2. This Aspergillus oryzae (strain ATCC 42149 / RIB 40) (Yellow koji mold) protein is Fe-S cluster assembly protein dre2.